The following is a 489-amino-acid chain: Amino acid transporter AVT6E (489 aa).

A run of 11 helical transmembrane segments spans residues 76-96, 102-122, 156-176, 201-221, 227-247, 269-289, 310-330, 357-377, 404-424, 425-445, and 461-481; these read GIYG…IMAL, VLGL…SEIS, ICII…MGDV, VLIL…NKID, SAAS…VATI, ILDL…HFNV, ITTA…YLLF, IVRI…HFSL, VVLL…WTAF, KFTG…LIAL, and VSWL…IGNI.

Belongs to the amino acid/polyamine transporter 2 family. Amino acid/auxin permease (AAAP) (TC 2.A.18.6) subfamily.

It localises to the endoplasmic reticulum membrane. The protein resides in the vacuole membrane. The sequence is that of Amino acid transporter AVT6E from Arabidopsis thaliana (Mouse-ear cress).